The sequence spans 393 residues: Elongation factor Tu (393 aa).

The tr-type G domain maps to 10-203; it reads KPHVNIGTIG…AVDEFIPEPL (194 aa). The segment at 19–26 is G1; that stretch reads GHVDHGKT. 19–26 lines the GTP pocket; it reads GHVDHGKT. A Mg(2+)-binding site is contributed by Thr26. Positions 60–64 are G2; sequence GITIS. The interval 81–84 is G3; it reads DCPG. Residues 81–85 and 136–139 contribute to the GTP site; these read DCPGH and NKVD. Residues 136 to 139 form a G4 region; the sequence is NKVD. Residues 173-175 are G5; sequence SAL.

It belongs to the TRAFAC class translation factor GTPase superfamily. Classic translation factor GTPase family. EF-Tu/EF-1A subfamily. As to quaternary structure, monomer.

The protein resides in the cytoplasm. The enzyme catalyses GTP + H2O = GDP + phosphate + H(+). Its function is as follows. GTP hydrolase that promotes the GTP-dependent binding of aminoacyl-tRNA to the A-site of ribosomes during protein biosynthesis. The protein is Elongation factor Tu of Chlorobium phaeobacteroides (strain DSM 266 / SMG 266 / 2430).